Consider the following 359-residue polypeptide: Histidinol-phosphate aminotransferase 1 (359 aa).

An N6-(pyridoxal phosphate)lysine modification is found at Lys-216.

It belongs to the class-II pyridoxal-phosphate-dependent aminotransferase family. Histidinol-phosphate aminotransferase subfamily. Homodimer. Requires pyridoxal 5'-phosphate as cofactor.

The catalysed reaction is L-histidinol phosphate + 2-oxoglutarate = 3-(imidazol-4-yl)-2-oxopropyl phosphate + L-glutamate. It participates in amino-acid biosynthesis; L-histidine biosynthesis; L-histidine from 5-phospho-alpha-D-ribose 1-diphosphate: step 7/9. This Caulobacter vibrioides (strain ATCC 19089 / CIP 103742 / CB 15) (Caulobacter crescentus) protein is Histidinol-phosphate aminotransferase 1 (hisC1).